The following is a 1623-amino-acid chain: ABC transporter C family member 2 (1623 aa).

9 helical membrane-spanning segments follow: residues 37-57 (FVLG…IWLA), 76-96 (FLAL…IMGI), 109-129 (FEAF…VMIL), 145-165 (FAVI…LSVK), 172-192 (VLYL…LLFM), 336-356 (AWMG…GVLC), 440-460 (VASL…TVII), 527-547 (FILN…FTLL), and 557-577 (FTSL…PNII). In terms of domain architecture, ABC transmembrane type-1 1 spans 302-582 (FWWGGFWKIG…LPNIITQVVN (281 aa)). Residues 614–838 (ISIRNGYFSW…GPLFQRLMEN (225 aa)) form the ABC transporter 1 domain. 649–656 (GSTGEGKT) is an ATP binding site. The tract at residues 842–890 (VEEYSEENGEAEADQTAEQPVANGNTNGLQMDGSDDKKSKEGNKKGGKS) is disordered. Over residues 845–856 (YSEENGEAEADQ) the composition is skewed to acidic residues. The span at 857 to 870 (TAEQPVANGNTNGL) shows a compositional bias: polar residues. Positions 875 to 885 (SDDKKSKEGNK) are enriched in basic and acidic residues. A run of 6 helical transmembrane segments spans residues 914–934 (ALGG…TEVF), 955–975 (GPLF…LVTL), 1032–1054 (AVFV…LIGI), 1058–1077 (LSLW…YLYY), 1143–1163 (LGIR…SFAV), and 1177–1197 (STMG…TGVL). The 285-residue stretch at 921 to 1205 (VMMLLLCYVL…VLRLASLAEN (285 aa)) folds into the ABC transmembrane type-1 2 domain. Positions 1236–1251 (WPSSGSIKFEDVVLRY) are interaction with calmodulin and FKP42/TWD1. One can recognise an ABC transporter 2 domain in the interval 1242–1476 (IKFEDVVLRY…EGSSFSKMVQ (235 aa)). Residue 1276–1283 (GRTGAGKS) coordinates ATP.

This sequence belongs to the ABC transporter superfamily. ABCC family. Conjugate transporter (TC 3.A.1.208) subfamily. In terms of assembly, interacts with FKBP42/TWD1 and probably with calmodulin (CaM). As to expression, ubiquitous, at low levels.

The protein resides in the vacuole membrane. It catalyses the reaction ATP + H2O + xenobioticSide 1 = ADP + phosphate + xenobioticSide 2.. Its activity is regulated as follows. Reciprocal promotion of DNP-GS and E(2)17betaG uptake. E(2)17betaG uptake is also stimulated by GSH and S-methyl-glutathione (S-methyl-GS), and, to a lower extent, by GSSG and C3G-GS. Metolachlor-GS and decyl-GS slightly inhibit E(2)17betaG uptake. Pump for glutathione S-conjugates. Mediates the transport of S-conjugates such as GSH, S-(2,4-dinitrophenyl)-glutathione (DNP-GS), GSSG, cyanidin 3-glucoside-GS (C3G-GS) and metolachlor-GS (MOC-GS), glucuronides such as 17-beta-estradiol 17-(beta-D-glucuronide) (E(2)17betaG), and of the chlorophyll catabolite such as B.napus nonfluorescent chlorophyll catabolite (Bn-NCC-1). The protein is ABC transporter C family member 2 (ABCC2) of Arabidopsis thaliana (Mouse-ear cress).